The chain runs to 528 residues: Na(+)/H(+) antiporter NhaB (528 aa).

10 consecutive transmembrane segments (helical) span residues 11–31, 67–87, 98–118, 140–160, 240–260, 311–331, 350–370, 391–411, 449–469, and 476–496; these read VNFL…FLVI, PGGL…SQVL, LLLI…LFVF, AFLS…AVGI, FFIR…LTCV, LVAG…SVII, EEAL…GVII, LVVF…VFVG, ATPN…APLI, and MVIM…VTIE.

The protein belongs to the NhaB Na(+)/H(+) (TC 2.A.34) antiporter family.

Its subcellular location is the cell inner membrane. It catalyses the reaction 2 Na(+)(in) + 3 H(+)(out) = 2 Na(+)(out) + 3 H(+)(in). In terms of biological role, na(+)/H(+) antiporter that extrudes sodium in exchange for external protons. This chain is Na(+)/H(+) antiporter NhaB, found in Shewanella denitrificans (strain OS217 / ATCC BAA-1090 / DSM 15013).